The chain runs to 210 residues: uncharacterized protein (210 aa).

A compositionally biased stretch (low complexity) spans 101 to 114 (QELPEPSSPQSQSS). Positions 101–166 (QELPEPSSPQ…SSGVSSDLQK (66 aa)) are disordered. Residues 147–164 (RSTSPVTASTSSGVSSDL) show a composition bias toward polar residues.

This is an uncharacterized protein from Alcelaphine herpesvirus 1 (strain C500) (AlHV-1).